Consider the following 627-residue polypeptide: Threonine--tRNA ligase (627 aa).

Residues 221–523 (DHRKLGRELG…LIEHFAGDFP (303 aa)) are catalytic. 3 residues coordinate Zn(2+): C319, H370, and H500.

It belongs to the class-II aminoacyl-tRNA synthetase family. In terms of assembly, homodimer. Requires Zn(2+) as cofactor.

The protein resides in the cytoplasm. It carries out the reaction tRNA(Thr) + L-threonine + ATP = L-threonyl-tRNA(Thr) + AMP + diphosphate + H(+). Functionally, catalyzes the attachment of threonine to tRNA(Thr) in a two-step reaction: L-threonine is first activated by ATP to form Thr-AMP and then transferred to the acceptor end of tRNA(Thr). Also edits incorrectly charged L-seryl-tRNA(Thr). This is Threonine--tRNA ligase from Gloeobacter violaceus (strain ATCC 29082 / PCC 7421).